The sequence spans 892 residues: Alanine--tRNA ligase (892 aa).

Residues H574, H578, C676, and H680 each contribute to the Zn(2+) site.

It belongs to the class-II aminoacyl-tRNA synthetase family. Requires Zn(2+) as cofactor.

The protein resides in the cytoplasm. The catalysed reaction is tRNA(Ala) + L-alanine + ATP = L-alanyl-tRNA(Ala) + AMP + diphosphate. Functionally, catalyzes the attachment of alanine to tRNA(Ala) in a two-step reaction: alanine is first activated by ATP to form Ala-AMP and then transferred to the acceptor end of tRNA(Ala). Also edits incorrectly charged Ser-tRNA(Ala) and Gly-tRNA(Ala) via its editing domain. This is Alanine--tRNA ligase from Prochlorococcus marinus (strain SARG / CCMP1375 / SS120).